The chain runs to 1482 residues: MIERGKFRSLTLINWNGFFARTFDLDELVTTLSGGNGAGKSTTMAAFVTALIPDLTLLHFRNTTEAGATSGSRDKGLHGKLKAGVCYSVLDVINSRHQRVVVGVRLQQVAGRDRKVDIKPFAIQGLPTSVQPTAMLTETLNDRQARVLSLQELKEKLEEIEGVQFKQFNSITDYHSLMFDLGIVARRLRSASDRSKYYRLIEASLYGGISSAITRSLRDYLLPENSGVRKAFQDMEAALRENRMTLEAIRVTQSDRDLFKHLISEATNYVAADYMRHANERRIHLDKALEYRRELFTSRKQLVAEQYKHVEMARELGEQNGAEGDLEADYQAASDHLNLVQTALRQQEKIERYESDLDELQIRLEEQNEVVAEATEMQEENEARAEAAELEVDELKNQLADYQQALDVQQTRAIQYTQALQALQRAKELCHLPDLTPESADEWLETFQAKQQEATDKLLSLDQKMSVAQTAHSQFEQAYQLVTAINGPLARSDAWEVARELLRDGVNQRHLAEQVQPLRMRLNELEQRLREQQEAERLLAEFCKRYGKRVDIDDLEALHQELEARIASLSDSVSNAGEQRMSLRQELEQLQSRTQKLLQRAPVWLAAQSSLNQLSEQCGEEFESSQDVTEYLQQLLEREREAIVERDEVGARKRAIDEEIERLSQPGGAEDSRLNALAERFGGVLLSEIYDDVSLDDAPYFSALYGPSRNAIVVPDLSLIADQLEGLEDCPEDLYLIEGDPQSFDDSVFSVDELEKAVVVKIADRQWRYSRFPTLPLFGRAARENRIESLHAERETLSERFATLSFDVQKTQRLHQSFSRFIGSHVAVAFEPDPEAEIRKLNTRRGELERAISLHENDNQQSRVQFEQAKEGVAALNRILPRLNLLADETLADRVDEIQERLDEAQEAARFVQQHGNQLAKLEPVLSVLQSDPEQFEQLKEDYAYSQQVQRDARQQAFALAEVVQRRAHFGYSDSAEMLSGNSDLNEKLRHRLEQAETERSRTRDALRSHAAQLSQYGQVLASLKSSFDTKKELLTDLQKELQDIGVRADSGAEERARIRRDELHSQLSNNRSRRNQLEKALTLCEAEMDNLTRRLRKLERDYHEMREQVVTAKAGWCAVMRLVKDSGVERRLHRRELAYLSGDELRSMSDKALGALRPAVADNEHLRDVLRMSEDPKRPERKIQFFVAVYQHLRERIRQDIIRTDDPVEAIEQMEIELGRLTEELTSREQTLAISSRSVANIIRKTIQREQNRIRMLNQGLQSVSFGQVNSVRLNVNVLEAHATLLDVLSEQHEQHQDLFNSNRLTFSEALAKLYQRLNPQIDMGQRTPQTIGEELLDYRNYLEMEVEVNRGSDGWLRAESGALSTGEAIGTGMSILVMVVQSWEDESRRLRGKDISPCRLLFLDEAARLDARSIATLFELCDRLGMQLIIAAPENISPEKGTTYKLVRKVFQNTEHVHVVGLRGFAPQPPESLPEAADAS.

An ATP-binding site is contributed by 34–41 (GGNGAGKS). Coiled-coil stretches lie at residues 326–416 (LEAD…AIQY), 509–603 (RHLA…RAPV), 780–805 (RAAR…ATLS), 835–923 (EAEI…AKLE), 979–1116 (LSGN…AKAG), and 1210–1265 (EAIE…LQSV). The flexible hinge stretch occupies residues 666–783 (PGGAEDSRLN…TLPLFGRAAR (118 aa)).

The protein belongs to the SMC family. MukB subfamily. In terms of assembly, homodimerization via its hinge domain. Binds to DNA via its C-terminal region. Interacts, and probably forms a ternary complex, with MukE and MukF via its C-terminal region. The complex formation is stimulated by calcium or magnesium. Interacts with tubulin-related protein FtsZ.

The protein resides in the cytoplasm. It localises to the nucleoid. Plays a central role in chromosome condensation, segregation and cell cycle progression. Functions as a homodimer, which is essential for chromosome partition. Involved in negative DNA supercoiling in vivo, and by this means organize and compact chromosomes. May achieve or facilitate chromosome segregation by condensation DNA from both sides of a centrally located replisome during cell division. The polypeptide is Chromosome partition protein MukB (Enterobacter sp. (strain 638)).